The following is a 427-amino-acid chain: Flotillin-1 (427 aa).

Phosphoserine is present on residues Ser19, Ser163, and Ser385.

The protein belongs to the band 7/mec-2 family. Flotillin subfamily. In terms of assembly, heterooligomeric complex of flotillin-1 and flotillin-2 and caveolin-1 and caveolin-2. Interacts with ECPAS.

It localises to the cell membrane. It is found in the endosome. The protein resides in the membrane. Its subcellular location is the caveola. The protein localises to the melanosome. It localises to the membrane raft. Its function is as follows. May act as a scaffolding protein within caveolar membranes, functionally participating in formation of caveolae or caveolae-like vesicles. The chain is Flotillin-1 (FLOT1) from Bos taurus (Bovine).